Reading from the N-terminus, the 208-residue chain is Redox-sensing transcriptional repressor Rex (208 aa).

The segment at residues 16–55 is a DNA-binding region (H-T-H motif); that stretch reads LYYRCLSELNEKGEDKVSSAVLERLLKIDAATVRRDFSYF. 90-95 is a binding site for NAD(+); sequence GVGNLG.

Belongs to the transcriptional regulatory Rex family. As to quaternary structure, homodimer.

It is found in the cytoplasm. Modulates transcription in response to changes in cellular NADH/NAD(+) redox state. The protein is Redox-sensing transcriptional repressor Rex of Pediococcus pentosaceus (strain ATCC 25745 / CCUG 21536 / LMG 10740 / 183-1w).